Reading from the N-terminus, the 594-residue chain is Actin-histidine N-methyltransferase (594 aa).

The tract at residues 1–22 is disordered; sequence MGKKSRVKTQKSGTGATATVSP. Polar residues predominate over residues 10–20; sequence QKSGTGATATV. Residues arginine 75, 104 to 106, arginine 254, 275 to 279, and 325 to 327 contribute to the S-adenosyl-L-methionine site; these read EGF, DMCNH, and SGF. The SET domain maps to 94-314; it reads EGFEMVNFKE…AGDQIYIFYG (221 aa). The disordered stretch occupies residues 551 to 594; the sequence is GLVNGENLIPNGTRSENESLSPEESENVTGEESSGSMAKVKERL.

The protein belongs to the class V-like SAM-binding methyltransferase superfamily. SETD3 actin-histidine methyltransferase family. Interacts with MYOD1. Post-translationally, phosphorylated by GSK3B, which is required for recognition by the SCF(FBXW7) complex and subsequent degradation. Ubiquitinated by the SCF(FBXW7) complex following phosphorylation by GSK3B, leading to its degradation by the proteasome. In terms of tissue distribution, prominently expressed in the heart and skeletal muscles and is also detected weakly in the stomach, small intestine, and colon.

Its subcellular location is the cytoplasm. The protein localises to the nucleus. It catalyses the reaction L-histidyl-[protein] + S-adenosyl-L-methionine = N(tele)-methyl-L-histidyl-[protein] + S-adenosyl-L-homocysteine + H(+). Protein-histidine N-methyltransferase that specifically mediates 3-methylhistidine (tele-methylhistidine) methylation of actin at 'His-73'. Histidine methylation of actin is required for smooth muscle contraction of the laboring uterus during delivery. Does not have protein-lysine N-methyltransferase activity and probably only catalyzes histidine methylation of actin. This Mus musculus (Mouse) protein is Actin-histidine N-methyltransferase.